A 485-amino-acid chain; its full sequence is Glutamyl-tRNA(Gln) amidotransferase subunit A (485 aa).

Active-site charge relay system residues include K79 and S154. Catalysis depends on S178, which acts as the Acyl-ester intermediate.

The protein belongs to the amidase family. GatA subfamily. In terms of assembly, heterotrimer of A, B and C subunits.

It carries out the reaction L-glutamyl-tRNA(Gln) + L-glutamine + ATP + H2O = L-glutaminyl-tRNA(Gln) + L-glutamate + ADP + phosphate + H(+). In terms of biological role, allows the formation of correctly charged Gln-tRNA(Gln) through the transamidation of misacylated Glu-tRNA(Gln) in organisms which lack glutaminyl-tRNA synthetase. The reaction takes place in the presence of glutamine and ATP through an activated gamma-phospho-Glu-tRNA(Gln). This chain is Glutamyl-tRNA(Gln) amidotransferase subunit A, found in Sulfurihydrogenibium sp. (strain YO3AOP1).